Reading from the N-terminus, the 445-residue chain is tRNA modification GTPase MnmE (445 aa).

(6S)-5-formyl-5,6,7,8-tetrahydrofolate contacts are provided by arginine 20, glutamate 79, and lysine 119. Residues 215–371 enclose the TrmE-type G domain; it reads GLKLAIVGPP…ILKNIENIAE (157 aa). Asparagine 225 is a binding site for K(+). GTP-binding positions include 225–230, 244–250, and 269–272; these read NTGKSS, SNIAGTT, and DTAG. Residue serine 229 participates in Mg(2+) binding. Positions 244, 246, and 249 each coordinate K(+). Mg(2+) is bound at residue threonine 250. Lysine 445 lines the (6S)-5-formyl-5,6,7,8-tetrahydrofolate pocket.

Belongs to the TRAFAC class TrmE-Era-EngA-EngB-Septin-like GTPase superfamily. TrmE GTPase family. In terms of assembly, homodimer. Heterotetramer of two MnmE and two MnmG subunits. Requires K(+) as cofactor.

It is found in the cytoplasm. Exhibits a very high intrinsic GTPase hydrolysis rate. Involved in the addition of a carboxymethylaminomethyl (cmnm) group at the wobble position (U34) of certain tRNAs, forming tRNA-cmnm(5)s(2)U34. The chain is tRNA modification GTPase MnmE from Rickettsia akari (strain Hartford).